Reading from the N-terminus, the 134-residue chain is S-protein homolog 31 (134 aa).

The signal sequence occupies residues 1-21 (MKILSVFLFVFSIYIFGHVSG). N-linked (GlcNAc...) asparagine glycosylation occurs at N87.

The protein belongs to the plant self-incompatibility (S1) protein family.

It is found in the secreted. This is S-protein homolog 31 from Arabidopsis thaliana (Mouse-ear cress).